Reading from the N-terminus, the 164-residue chain is Kunitz-type proteinase inhibitor BbCI (164 aa).

Belongs to the protease inhibitor I3 (leguminous Kunitz-type inhibitor) family.

Its subcellular location is the secreted. Inhibits T.cruzi cruzipain. The protein is Kunitz-type proteinase inhibitor BbCI of Bauhinia bauhinioides (Perlebia bauhinoides).